The following is a 624-amino-acid chain: Phosphoenolpyruvate carboxykinase (ATP) 1 (624 aa).

Positions 1–22 (MASPNGGVTTYDYDDSDSAAPV) are disordered. 322-329 (GLSGTGKT) serves as a coordination point for ATP.

Belongs to the phosphoenolpyruvate carboxykinase (ATP) family. In terms of assembly, homohexamer. Green leaves but not in roots or etiolated shoots.

It is found in the cytoplasm. The catalysed reaction is oxaloacetate + ATP = phosphoenolpyruvate + ADP + CO2. It functions in the pathway carbohydrate biosynthesis; gluconeogenesis. This chain is Phosphoenolpyruvate carboxykinase (ATP) 1 (PCK1), found in Urochloa panicoides (Panic liverseed grass).